The chain runs to 190 residues: Selenoprotein S (190 aa).

A helical transmembrane segment spans residues 28–48 (SLLASYGWYILFSCVLLYIVI). Residues 78–90 (RQEALAAARLRMQ) are VCP/p97-interacting motif (VIM). A disordered region spans residues 96 to 190 (QVEKHKEKQR…RRGPSSGGUS (95 aa)). Residues 97 to 118 (VEKHKEKQRQLEEEKRRQKIEM) are compositionally biased toward basic and acidic residues. Over residues 160 to 174 (RGGGYNPLTGEGGGT) the composition is skewed to gly residues. Selenocysteine 189 is a non-standard amino acid (selenocysteine).

The protein belongs to the selenoprotein S family. In terms of assembly, interacts with DERL1 and (via VIM motif) with VCP, suggesting that it forms a membrane complex with DERL1 that serves as a receptor for VCP. Also interacts with DERL2, DERL3 and SELENOK. The SELENOK-SELENOS complex interacts with VCP. Interacts with CCDC47. Post-translationally, truncated SELENOS proteins produced by failed UGA/Sec decoding are ubiquitinated by the CRL2(KLHDC2) and CRL2(KLHDC3) complexes, which recognizes the glycine (Gly) at the C-terminus of truncated SELENOS proteins. Truncated SELENOS proteins produced by failed UGA/Sec decoding are also ubiquitinated by the CRL5(KLHDC1) complex.

The protein resides in the endoplasmic reticulum membrane. The protein localises to the cytoplasm. Involved in the degradation process of misfolded endoplasmic reticulum (ER) luminal proteins. Participates in the transfer of misfolded proteins from the ER to the cytosol, where they are destroyed by the proteasome in a ubiquitin-dependent manner. Probably acts by serving as a linker between DERL1, which mediates the retrotranslocation of misfolded proteins into the cytosol, and the ATPase complex VCP, which mediates the translocation and ubiquitination. The chain is Selenoprotein S from Rattus norvegicus (Rat).